The chain runs to 879 residues: DNA mismatch repair protein MutS (879 aa).

629-636 (GPNMGGKS) serves as a coordination point for ATP.

It belongs to the DNA mismatch repair MutS family.

Functionally, this protein is involved in the repair of mismatches in DNA. It is possible that it carries out the mismatch recognition step. This protein has a weak ATPase activity. This Erythrobacter litoralis (strain HTCC2594) protein is DNA mismatch repair protein MutS.